A 293-amino-acid polypeptide reads, in one-letter code: Ribosomal protein L11 methyltransferase (293 aa).

Thr-146, Gly-167, Asp-189, and Asn-230 together coordinate S-adenosyl-L-methionine.

This sequence belongs to the methyltransferase superfamily. PrmA family.

Its subcellular location is the cytoplasm. The enzyme catalyses L-lysyl-[protein] + 3 S-adenosyl-L-methionine = N(6),N(6),N(6)-trimethyl-L-lysyl-[protein] + 3 S-adenosyl-L-homocysteine + 3 H(+). Its function is as follows. Methylates ribosomal protein L11. This Colwellia psychrerythraea (strain 34H / ATCC BAA-681) (Vibrio psychroerythus) protein is Ribosomal protein L11 methyltransferase.